An 83-amino-acid chain; its full sequence is Tetracenomycin polyketide synthase acyl carrier protein (83 aa).

The region spanning 3-83 (QIGLPRLVEI…VNTETAGEVA (81 aa)) is the Carrier domain. Ser-41 is modified (O-(pantetheine 4'-phosphoryl)serine).

As to quaternary structure, the tetracenomycin polyketide synthase (TCM PKS) is composed of a ketosynthase complex (TcmKL), an acyl carrier protein (TcmM), a cyclase (TcmN) and a probable second cyclase (TcmJ). Pantetheine 4'-phosphate is required as a cofactor. In terms of processing, 4'-phosphopantetheine is transferred from CoA to a specific serine of apo-ACP.

It catalyses the reaction 10 malonyl-CoA + 8 H(+) = tetracenomycin F2 + 10 CO2 + 10 CoA + 2 H2O. Its pathway is antibiotic biosynthesis; tetracenomycin C biosynthesis. Functionally, involved in the biosynthesis of tetracenomycin C (TCM C). Part of a type II polyketide synthase (PKS) that catalyzes the synthesis of tetracenomycin F2 (TCM F2), a precursor of TCM C, from malonyl-CoA. TcmM is an acyl carrier protein that serves as an acceptor of malonate from malonyl-CoA and acts as the tether for the substrates and intermediates of polyketide assembly. The malonyl CoA-acyl carrier protein transacylase FabD (MCT) is required to catalyze the transacylation between malonyl-CoA and TcmM, although a relatively slow spontaneous self-malonylation of TcmM also occurs in a reaction without the MCT. This chain is Tetracenomycin polyketide synthase acyl carrier protein, found in Streptomyces glaucescens.